Here is a 397-residue protein sequence, read N- to C-terminus: MADLRLFTSESVTEGHPDKICDQISDSILDALLAVDEHSRVAVETLVTTGLVHVAGEVTTKGYVEIPALVRDTIVEIGYDSSDVSFDGTQCGVSVSIGAQSPDIAQGVDNALETRSERSQDDLDRQGAGDQGIMFGFATTETPQYMPLPIWLAHRLAERLAAVRKDGTLGYLRPDGKTQVTIGYEGYVPKSVQTVVLSTQHARDIPSQQLRADVIEQVIEPVMHAAGVETSHIRTLINPTGRFEIGGPKGDAGLTGRKIIVDTYGGASRHGGGAFSGKDPSKVDRSAAYALRWVAKNAVAAGLADRLEVQIAYAIGKAAPVGLYVETFGTAHVPDERIIHAIREVFDLRPAAIARDLDLLRPIYARTATYGHFGRELPDFTWERLDRVDDLRSAAGL.

ATP is bound at residue His-16. A Mg(2+)-binding site is contributed by Asp-18. Glu-44 contacts K(+). Residues Glu-57 and Gln-100 each contribute to the L-methionine site. Residues 100–110 form a flexible loop region; it reads QSPDIAQGVDN. ATP-binding positions include 175–177, 242–243, Asp-251, 257–258, Ala-274, and Lys-278; these read DGK, RF, and RK. Residue Asp-251 coordinates L-methionine. An L-methionine-binding site is contributed by Lys-282.

It belongs to the AdoMet synthase family. Homotetramer; dimer of dimers. Mg(2+) serves as cofactor. K(+) is required as a cofactor.

Its subcellular location is the cytoplasm. It catalyses the reaction L-methionine + ATP + H2O = S-adenosyl-L-methionine + phosphate + diphosphate. It functions in the pathway amino-acid biosynthesis; S-adenosyl-L-methionine biosynthesis; S-adenosyl-L-methionine from L-methionine: step 1/1. Its function is as follows. Catalyzes the formation of S-adenosylmethionine (AdoMet) from methionine and ATP. The overall synthetic reaction is composed of two sequential steps, AdoMet formation and the subsequent tripolyphosphate hydrolysis which occurs prior to release of AdoMet from the enzyme. The polypeptide is S-adenosylmethionine synthase (Leifsonia xyli subsp. xyli (strain CTCB07)).